We begin with the raw amino-acid sequence, 1070 residues long: DNA-directed RNA polymerase subunit beta (1070 aa).

Belongs to the RNA polymerase beta chain family. As to quaternary structure, in plastids the minimal PEP RNA polymerase catalytic core is composed of four subunits: alpha, beta, beta', and beta''. When a (nuclear-encoded) sigma factor is associated with the core the holoenzyme is formed, which can initiate transcription.

The protein localises to the plastid. It is found in the chloroplast. It carries out the reaction RNA(n) + a ribonucleoside 5'-triphosphate = RNA(n+1) + diphosphate. Functionally, DNA-dependent RNA polymerase catalyzes the transcription of DNA into RNA using the four ribonucleoside triphosphates as substrates. The chain is DNA-directed RNA polymerase subunit beta from Gossypium barbadense (Sea Island cotton).